A 272-amino-acid polypeptide reads, in one-letter code: Methylsterol monooxygenase 2-1 (272 aa).

The next 3 helical transmembrane spans lie at 24–44 (IGSF…YIFL), 72–94 (LLLY…FRFM), and 107–127 (VVSA…YWGH). One can recognise a Fatty acid hydroxylase domain in the interval 113–259 (LFYFIIEDFV…FVYMDWIFGT (147 aa)). A Histidine box-1 motif is present at residues 127-131 (HRILH). The short motif at 140-144 (HSVHH) is the Histidine box-2 element. The next 2 helical transmembrane spans lie at 162 to 182 (ILFL…HLIT) and 209 to 229 (NFLP…AYSA). Residues 231–237 (FHDYHHR) carry the Histidine box-3 motif.

Belongs to the sterol desaturase family. Fe cation is required as a cofactor. As to expression, strongly expressed in leaves, flowers, siliques and developing seeds.

The protein localises to the endoplasmic reticulum membrane. It carries out the reaction 4,4-dimethyl-5alpha-cholest-7-en-3beta-ol + 6 Fe(II)-[cytochrome b5] + 3 O2 + 5 H(+) = 4alpha-carboxy-4beta-methyl-5alpha-cholest-7-ene-3beta-ol + 6 Fe(III)-[cytochrome b5] + 4 H2O. It catalyses the reaction 24-methylidenelophenol + 6 Fe(II)-[cytochrome b5] + 3 O2 + 5 H(+) = 4alpha-carboxy-ergosta-7,24(24(1))-dien-3beta-ol + 6 Fe(III)-[cytochrome b5] + 4 H2O. Its function is as follows. Non-heme iron oxygenase involved in sterols biosynthesis by catalyzing the removal of the second methyl group at the C-4 position. 24-ethylidenelophenol and 24-ethyllophenol are the preferred substrates. Together with SMO2-2, required during embryogenesis, probably by maintaining sterols and auxin homeostasis. The polypeptide is Methylsterol monooxygenase 2-1 (Arabidopsis thaliana (Mouse-ear cress)).